The sequence spans 158 residues: Transcription elongation factor GreA (158 aa).

Belongs to the GreA/GreB family.

In terms of biological role, necessary for efficient RNA polymerase transcription elongation past template-encoded arresting sites. The arresting sites in DNA have the property of trapping a certain fraction of elongating RNA polymerases that pass through, resulting in locked ternary complexes. Cleavage of the nascent transcript by cleavage factors such as GreA or GreB allows the resumption of elongation from the new 3'terminus. GreA releases sequences of 2 to 3 nucleotides. This chain is Transcription elongation factor GreA, found in Polaromonas naphthalenivorans (strain CJ2).